The chain runs to 288 residues: MENISNRDKALILNQALPYIQKYTGKTVVIKYGGSAMENPELKKKVMSDVALLSTVGINVIVVHGGGKDITAMLNKIGKESKFINGLRYTDSETAEVVKMVLAGKVNKDLVASLENCGGKCLGICGIDGKMFKVSKYKGDDDLGFVGDVDHVDTDLLNTIITNKYIPIVATIGCDDEGNVYNINADTAAARIAESLKAETLIYMTDTPGLLKDKDDENTLISQINIKDIDNLIKDGTISGGMIPKVKHCIDAVENGVSKVFIIDGRLCHSLLIEMFTDEGIGTMFHKD.

Substrate contacts are provided by residues 66–67 (GG), Arg88, and Asn182.

This sequence belongs to the acetylglutamate kinase family. ArgB subfamily.

The protein resides in the cytoplasm. It catalyses the reaction N-acetyl-L-glutamate + ATP = N-acetyl-L-glutamyl 5-phosphate + ADP. It participates in amino-acid biosynthesis; L-arginine biosynthesis; N(2)-acetyl-L-ornithine from L-glutamate: step 2/4. Catalyzes the ATP-dependent phosphorylation of N-acetyl-L-glutamate. This chain is Acetylglutamate kinase, found in Brachyspira hyodysenteriae (strain ATCC 49526 / WA1).